Reading from the N-terminus, the 267-residue chain is 3-methyl-2-oxobutanoate hydroxymethyltransferase (267 aa).

Mg(2+) contacts are provided by Asp45 and Asp84. Residues 45–46 (DS), Asp84, and Lys113 contribute to the 3-methyl-2-oxobutanoate site. Residue Glu115 participates in Mg(2+) binding. Glu182 serves as the catalytic Proton acceptor.

Belongs to the PanB family. In terms of assembly, homodecamer; pentamer of dimers. It depends on Mg(2+) as a cofactor.

Its subcellular location is the cytoplasm. It carries out the reaction 3-methyl-2-oxobutanoate + (6R)-5,10-methylene-5,6,7,8-tetrahydrofolate + H2O = 2-dehydropantoate + (6S)-5,6,7,8-tetrahydrofolate. Its pathway is cofactor biosynthesis; coenzyme A biosynthesis. Its function is as follows. Catalyzes the reversible reaction in which hydroxymethyl group from 5,10-methylenetetrahydrofolate is transferred onto alpha-ketoisovalerate to form ketopantoate. The polypeptide is 3-methyl-2-oxobutanoate hydroxymethyltransferase (Saccharolobus islandicus (strain Y.G.57.14 / Yellowstone #1) (Sulfolobus islandicus)).